The chain runs to 507 residues: ATP synthase subunit alpha, chloroplastic (507 aa).

170–177 contacts ATP; that stretch reads GDRQTGKT. Thr-257 is modified (phosphothreonine).

Belongs to the ATPase alpha/beta chains family. As to quaternary structure, F-type ATPases have 2 components, CF(1) - the catalytic core - and CF(0) - the membrane proton channel. CF(1) has five subunits: alpha(3), beta(3), gamma(1), delta(1), epsilon(1). CF(0) has four main subunits: a, b, b' and c.

Its subcellular location is the plastid. The protein localises to the chloroplast thylakoid membrane. It carries out the reaction ATP + H2O + 4 H(+)(in) = ADP + phosphate + 5 H(+)(out). In terms of biological role, produces ATP from ADP in the presence of a proton gradient across the membrane. The alpha chain is a regulatory subunit. In Lobularia maritima (Sweet alyssum), this protein is ATP synthase subunit alpha, chloroplastic.